The following is a 1318-amino-acid chain: Ubiquitin carboxyl-terminal hydrolase 19 (1318 aa).

Positions 1-109 are disordered; that stretch reads MSGGASATGP…GACEDPHDLL (109 aa). The Cytoplasmic portion of the chain corresponds to 1–1291; the sequence is MSGGASATGP…TTPDEGCLRY (1291 aa). Residues 28–44 show a composition bias toward basic and acidic residues; it reads DRANQESKDGDPRKETG. Polar residues predominate over residues 83–94; the sequence is PSSSGSASTPQE. Over residues 95 to 107 the composition is skewed to basic and acidic residues; the sequence is EQTKEGACEDPHD. Positions 113–202 constitute a CS 1 domain; sequence TPELLLDWRQ…VPMLTWPSLL (90 aa). The disordered stretch occupies residues 234–255; the sequence is KAVPPGNDPVSPAMVRSRNPGK. Serine 244 is subject to Phosphoserine. Positions 282 to 384 constitute a CS 2 domain; it reads LAFVKNDSYE…RQSQRWGGLE (103 aa). A disordered region spans residues 390–479; it reads VGGAKVAVPT…PMPHSPVSGD (90 aa). Basic and acidic residues-rich tracts occupy residues 420-436 and 447-457; these read EEAR…RSED and PMEHVTPKPET. The 718-residue stretch at 497–1214 folds into the USP domain; the sequence is TGLVNLGNTC…YAYVLFYRRR (718 aa). The active-site Nucleophile is the cysteine 506. Cysteine 791, cysteine 794, cysteine 808, cysteine 811, cysteine 817, cysteine 821, histidine 829, and cysteine 833 together coordinate Zn(2+). The MYND-type zinc-finger motif lies at 791–833; that stretch reads CAACQRKQQSEDEKLKRCTRCYRVGYCNQLCQKTHWPDHKGLC. The active-site Proton acceptor is the histidine 1165. A compositionally biased stretch (basic and acidic residues) spans 1218–1232; that stretch reads VERPPRAGHSEHHPD. The segment at 1218-1239 is disordered; sequence VERPPRAGHSEHHPDLGPAAEA. Residues 1292–1312 form a helical membrane-spanning segment; sequence FVLGTVAALVALVLNVFYPLV. Over 1313 to 1318 the chain is Lumenal; it reads SQSRWR.

This sequence belongs to the peptidase C19 family. In terms of assembly, interacts with RNF123. Interacts with BIRC2/c-IAP1, BIRC3/c-IAP2 and XIAP/BIRC4. Interacts with HIF1A (via N-terminus). Interacts (via N-terminus) with HSP90AA1; this interaction activates the deubiquitinase activity of USP19.

The protein localises to the endoplasmic reticulum membrane. The enzyme catalyses Thiol-dependent hydrolysis of ester, thioester, amide, peptide and isopeptide bonds formed by the C-terminal Gly of ubiquitin (a 76-residue protein attached to proteins as an intracellular targeting signal).. Functionally, deubiquitinating enzyme that regulates the degradation of various proteins by removing ubiquitin moieties, thereby preventing their proteasomal degradation. Stabilizes RNF123, which promotes CDKN1B degradation and contributes to cell proliferation. Decreases the levels of ubiquitinated proteins during skeletal muscle formation and acts to repress myogenesis. Modulates transcription of major myofibrillar proteins. Also involved in turnover of endoplasmic-reticulum-associated degradation (ERAD) substrates. Mechanistically, deubiquitinates and thereby stabilizes several E3 ligases involved in the ERAD pathway including SYVN1 or MARCHF6. Regulates the stability of other E3 ligases including BIRC2/c-IAP1 and BIRC3/c-IAP2 by preventing their ubiquitination. Required for cells to mount an appropriate response to hypoxia by rescuing HIF1A from degradation in a non-catalytic manner and by mediating the deubiquitination of FUNDC1. Attenuates mitochondrial damage and ferroptosis by targeting and stabilizing NADPH oxidase 4/NOX4. Negatively regulates TNF-alpha- and IL-1beta-triggered NF-kappa-B activation by hydrolyzing 'Lys-27'- and 'Lys-63'-linked polyubiquitin chains from MAP3K7. Modulates also the protein level and aggregation of polyQ-expanded huntingtin/HTT through HSP90AA1. This Homo sapiens (Human) protein is Ubiquitin carboxyl-terminal hydrolase 19 (USP19).